The chain runs to 463 residues: Methionine aminopeptidase 2-1 (463 aa).

The span at 1–12 (MGSKTPDGHRQG) shows a compositional bias: basic and acidic residues. The interval 1 to 96 (MGSKTPDGHR…SGQQTTPPRV (96 aa)) is disordered. The span at 41–53 (SGEDDEDGDDDEE) shows a compositional bias: acidic residues. Residues 58–67 (DLNSRAQPNN) show a composition bias toward polar residues. The segment covering 70–85 (KKRKRKNNKKKKKKRP) has biased composition (basic residues). His-215 is a substrate binding site. The a divalent metal cation site is built by Asp-236, Asp-247, and His-316. His-324 contributes to the substrate binding site. Residues Glu-349 and Glu-444 each coordinate a divalent metal cation.

The protein belongs to the peptidase M24A family. Methionine aminopeptidase eukaryotic type 2 subfamily. The cofactor is Co(2+). Zn(2+) is required as a cofactor. It depends on Mn(2+) as a cofactor. Requires Fe(2+) as cofactor.

The protein localises to the cytoplasm. The enzyme catalyses Release of N-terminal amino acids, preferentially methionine, from peptides and arylamides.. Cotranslationally removes the N-terminal methionine from nascent proteins. The N-terminal methionine is often cleaved when the second residue in the primary sequence is small and uncharged (Met-Ala-, Cys, Gly, Pro, Ser, Thr, or Val). This chain is Methionine aminopeptidase 2-1, found in Arthroderma otae (strain ATCC MYA-4605 / CBS 113480) (Microsporum canis).